Reading from the N-terminus, the 285-residue chain is uncharacterized protein (285 aa).

The Guanylate cyclase domain occupies threonine 92–arginine 199.

It belongs to the adenylyl cyclase class-4/guanylyl cyclase family.

This is an uncharacterized protein from Mycobacterium tuberculosis (strain ATCC 25618 / H37Rv).